A 219-amino-acid chain; its full sequence is Probable GTP-binding protein EngB (219 aa).

In terms of domain architecture, EngB-type G spans 31–205 (VGVEIAFAGR…LSILNEWCHP (175 aa)). Residues 39–46 (GRSNAGKS), 66–70 (GRTQL), 84–87 (DLPG), 151–154 (TKSD), and 184–186 (FSA) contribute to the GTP site. The Mg(2+) site is built by Ser46 and Thr68.

The protein belongs to the TRAFAC class TrmE-Era-EngA-EngB-Septin-like GTPase superfamily. EngB GTPase family. The cofactor is Mg(2+).

Necessary for normal cell division and for the maintenance of normal septation. In Shewanella sp. (strain MR-7), this protein is Probable GTP-binding protein EngB.